The sequence spans 185 residues: Elongation factor P (185 aa).

It belongs to the elongation factor P family.

It localises to the cytoplasm. The protein operates within protein biosynthesis; polypeptide chain elongation. Its function is as follows. Involved in peptide bond synthesis. Stimulates efficient translation and peptide-bond synthesis on native or reconstituted 70S ribosomes in vitro. Probably functions indirectly by altering the affinity of the ribosome for aminoacyl-tRNA, thus increasing their reactivity as acceptors for peptidyl transferase. This Burkholderia ambifaria (strain MC40-6) protein is Elongation factor P.